A 1058-amino-acid chain; its full sequence is Kinesin-like protein KIN-5D (1058 aa).

The tract at residues 1-43 (MDSIQQRRGGIVSLSPAQTPRSSDKSARESRSSESNSTNRNDK) is disordered. The span at 22 to 32 (SSDKSARESRS) shows a compositional bias: basic and acidic residues. The 343-residue stretch at 48–390 (NVQVILRCRP…LDYAHRAKNI (343 aa)) folds into the Kinesin motor domain. 134-141 (GQTGTGKT) serves as a coordination point for ATP. Residues 438-517 (QEEAEKKAMA…QANATIKEKE (80 aa)) are a coiled coil.

This sequence belongs to the TRAFAC class myosin-kinesin ATPase superfamily. Kinesin family. KIN-5/BimC subfamily.

It is found in the cytoplasm. The protein localises to the cytoskeleton. It localises to the spindle. Functionally, responsible for microtubule translocation. May be important for the organization of phragmoplast-specific arrays of microtubules. Plays an essential role in stabilizing the mitotic spindle. Required during mitotic cytokinesis. In Arabidopsis thaliana (Mouse-ear cress), this protein is Kinesin-like protein KIN-5D.